Here is a 25-residue protein sequence, read N- to C-terminus: Caerin-1.18 (25 aa).

Residue Leu25 is modified to Leucine amide.

As to expression, expressed by the skin dorsal glands.

It localises to the secreted. Its function is as follows. Shows significant activity against Gram-positive organisms, but is less effective against Gram-negative organisms. The protein is Caerin-1.18 of Ranoidea gracilenta (Dainty green tree frog).